The chain runs to 271 residues: Regulatory protein RecX (271 aa).

Belongs to the RecX family.

Its subcellular location is the cytoplasm. In terms of biological role, modulates RecA activity. In Lactobacillus delbrueckii subsp. bulgaricus (strain ATCC 11842 / DSM 20081 / BCRC 10696 / JCM 1002 / NBRC 13953 / NCIMB 11778 / NCTC 12712 / WDCM 00102 / Lb 14), this protein is Regulatory protein RecX.